A 393-amino-acid chain; its full sequence is 4-O-methyl-glucuronoyl methylesterase (393 aa).

Positions 1-19 (MKLSAALLAIAAFANVASA) are cleaved as a signal peptide. Residue glutamine 20 is modified to Pyrrolidone carboxylic acid. Cysteine 22 and cysteine 56 form a disulfide bridge. N-linked (GlcNAc...) asparagine glycosylation is found at asparagine 103 and asparagine 168. Residues 203–208 (GCSRNG) carry the GXSYXG catalytic site motif motif. Disulfide bonds link cysteine 204–cysteine 340 and cysteine 236–cysteine 312. Serine 205 (nucleophile) is an active-site residue. Substrate-binding residues include lysine 209, glutamine 251, glutamate 259, and tryptophan 303. The Proton donor/acceptor role is filled by histidine 339.

It belongs to the carbohydrate esterase 15 (CE15) family.

It localises to the secreted. It carries out the reaction a 4-O-methyl-alpha-D-glucuronosyl ester derivative + H2O = 4-O-methyl-alpha-D-glucuronate derivative + an alcohol + H(+). Glucuronoyl esterase which may play a significant role in biomass degradation, as it is considered to disconnect hemicellulose from lignin through the hydrolysis of the ester bond between 4-O-methyl-D-glucuronic acid residues of glucuronoxylans and aromatic alcohols of lignin. The chain is 4-O-methyl-glucuronoyl methylesterase from Schizophyllum commune (strain H4-8 / FGSC 9210) (Split gill fungus).